The chain runs to 226 residues: V-type proton ATPase subunit E 1 (226 aa).

At Ala-2 the chain carries N-acetylalanine. Residue Tyr-56 is modified to Phosphotyrosine.

This sequence belongs to the V-ATPase E subunit family. In terms of assembly, V-ATPase is a heteromultimeric enzyme made up of two complexes: the ATP-hydrolytic V1 complex and the proton translocation V0 complex. The V1 complex consists of three catalytic AB heterodimers that form a heterohexamer, three peripheral stalks each consisting of EG heterodimers, one central rotor including subunits D and F, and the regulatory subunits C and H. The proton translocation complex V0 consists of the proton transport subunit a, a ring of proteolipid subunits c9c'', rotary subunit d, subunits e and f, and the accessory subunits ATP6AP1/Ac45 and ATP6AP2/PRR. Interacts with RABL2/RABL2A; binds preferentially to GTP-bound RABL2. Interacts with ALDOC. Interacts with RAB11B. Expressed in brain (at protein level).

It is found in the apical cell membrane. It localises to the cytoplasmic vesicle. The protein resides in the secretory vesicle. Its subcellular location is the synaptic vesicle membrane. The protein localises to the clathrin-coated vesicle membrane. Subunit of the V1 complex of vacuolar(H+)-ATPase (V-ATPase), a multisubunit enzyme composed of a peripheral complex (V1) that hydrolyzes ATP and a membrane integral complex (V0) that translocates protons. V-ATPase is responsible for acidifying and maintaining the pH of intracellular compartments and in some cell types, is targeted to the plasma membrane, where it is responsible for acidifying the extracellular environment. The protein is V-type proton ATPase subunit E 1 (Atp6v1e1) of Rattus norvegicus (Rat).